A 259-amino-acid chain; its full sequence is 5'-nucleotidase SurE (259 aa).

Residues aspartate 8, aspartate 9, serine 41, and asparagine 99 each coordinate a divalent metal cation.

The protein belongs to the SurE nucleotidase family. The cofactor is a divalent metal cation.

It is found in the cytoplasm. The catalysed reaction is a ribonucleoside 5'-phosphate + H2O = a ribonucleoside + phosphate. Nucleotidase that shows phosphatase activity on nucleoside 5'-monophosphates. This is 5'-nucleotidase SurE from Synechococcus sp. (strain JA-3-3Ab) (Cyanobacteria bacterium Yellowstone A-Prime).